A 98-amino-acid chain; its full sequence is Beta-elicitin MGM-beta (98 aa).

Intrachain disulfides connect Cys3–Cys71, Cys27–Cys56, and Cys51–Cys95.

It belongs to the elicitin family.

It localises to the secreted. Its function is as follows. Induces local and distal defense responses (incompatible hypersensitive reaction) in plants from the solanaceae and cruciferae families. Elicits leaf necrosis and causes the accumulation of pathogenesis-related proteins. Might interact with the lipidic molecules of the plasma membrane. The sequence is that of Beta-elicitin MGM-beta from Phytophthora megasperma (Potato pink rot fungus).